We begin with the raw amino-acid sequence, 271 residues long: Ribosomal RNA small subunit methyltransferase A (271 aa).

Residues Asn-28, Leu-30, Gly-54, Glu-75, Asp-99, and Asn-117 each coordinate S-adenosyl-L-methionine.

The protein belongs to the class I-like SAM-binding methyltransferase superfamily. rRNA adenine N(6)-methyltransferase family. RsmA subfamily.

It localises to the cytoplasm. The enzyme catalyses adenosine(1518)/adenosine(1519) in 16S rRNA + 4 S-adenosyl-L-methionine = N(6)-dimethyladenosine(1518)/N(6)-dimethyladenosine(1519) in 16S rRNA + 4 S-adenosyl-L-homocysteine + 4 H(+). In terms of biological role, specifically dimethylates two adjacent adenosines (A1518 and A1519) in the loop of a conserved hairpin near the 3'-end of 16S rRNA in the 30S particle. May play a critical role in biogenesis of 30S subunits. This is Ribosomal RNA small subunit methyltransferase A from Thermus thermophilus (strain ATCC BAA-163 / DSM 7039 / HB27).